We begin with the raw amino-acid sequence, 154 residues long: Interleukin-2 (154 aa).

Positions 1 to 20 (MYKLQFLSCIALTLALVANS) are cleaved as a signal peptide. Thr23 carries an O-linked (GalNAc...) threonine glycan. A disulfide bond links Cys78 and Cys126. The N-linked (GlcNAc...) asparagine glycan is linked to Asn111.

Belongs to the IL-2 family.

It is found in the secreted. Functionally, cytokine produced by activated CD4-positive helper T-cells and to a lesser extend activated CD8-positive T-cells and natural killer (NK) cells that plays pivotal roles in the immune response and tolerance. Binds to a receptor complex composed of either the high-affinity trimeric IL-2R (IL2RA/CD25, IL2RB/CD122 and IL2RG/CD132) or the low-affinity dimeric IL-2R (IL2RB and IL2RG). Interaction with the receptor leads to oligomerization and conformation changes in the IL-2R subunits resulting in downstream signaling starting with phosphorylation of JAK1 and JAK3. In turn, JAK1 and JAK3 phosphorylate the receptor to form a docking site leading to the phosphorylation of several substrates including STAT5. This process leads to activation of several pathways including STAT, phosphoinositide-3-kinase/PI3K and mitogen-activated protein kinase/MAPK pathways. Functions as a T-cell growth factor and can increase NK-cell cytolytic activity as well. Promotes strong proliferation of activated B-cells and subsequently immunoglobulin production. Plays a pivotal role in regulating the adaptive immune system by controlling the survival and proliferation of regulatory T-cells, which are required for the maintenance of immune tolerance. Moreover, participates in the differentiation and homeostasis of effector T-cell subsets, including Th1, Th2, Th17 as well as memory CD8-positive T-cells. The sequence is that of Interleukin-2 (IL2) from Camelus bactrianus (Bactrian camel).